We begin with the raw amino-acid sequence, 498 residues long: Probable global transactivator (498 aa).

Residues 43-206 (RERRGRPHGG…YAIIHFLRCR (164 aa)) enclose the Helicase ATP-binding domain. ATP is bound at residue 55–63 (ADDMGLGKT). The DEAH box signature appears at 157–160 (DEAH). Residues 337–493 (ELVQRVLDTP…RTALNYEDIK (157 aa)) form the Helicase C-terminal domain.

Belongs to the SNF2/RAD54 helicase family.

In Orgyia pseudotsugata (Douglas-fir tussock moth), this protein is Probable global transactivator (GTA).